The chain runs to 506 residues: D-alanine--D-alanyl carrier protein ligase (506 aa).

An ATP-binding site is contributed by 152 to 153 (TS). Residue D197 participates in D-alanine binding. Residue 292–297 (NTYGPT) coordinates ATP. V301 provides a ligand contact to D-alanine. ATP is bound by residues D383, 395–398 (YRGR), and K494. K494 is a binding site for D-alanine.

Belongs to the ATP-dependent AMP-binding enzyme family. DltA subfamily.

It localises to the cytoplasm. It carries out the reaction holo-[D-alanyl-carrier protein] + D-alanine + ATP = D-alanyl-[D-alanyl-carrier protein] + AMP + diphosphate. Its pathway is cell wall biogenesis; lipoteichoic acid biosynthesis. Functionally, catalyzes the first step in the D-alanylation of lipoteichoic acid (LTA), the activation of D-alanine and its transfer onto the D-alanyl carrier protein (Dcp) DltC. In an ATP-dependent two-step reaction, forms a high energy D-alanyl-AMP intermediate, followed by transfer of the D-alanyl residue as a thiol ester to the phosphopantheinyl prosthetic group of the Dcp. D-alanylation of LTA plays an important role in modulating the properties of the cell wall in Gram-positive bacteria, influencing the net charge of the cell wall. This is D-alanine--D-alanyl carrier protein ligase from Lacticaseibacillus rhamnosus (Lactobacillus rhamnosus).